Here is a 427-residue protein sequence, read N- to C-terminus: 3-phosphoshikimate 1-carboxyvinyltransferase (427 aa).

3-phosphoshikimate is bound by residues K20, S21, and R25. K20 serves as a coordination point for phosphoenolpyruvate. The phosphoenolpyruvate site is built by G90 and R118. Residues S163, S164, Q165, S191, D309, and K336 each coordinate 3-phosphoshikimate. Residue Q165 participates in phosphoenolpyruvate binding. D309 serves as the catalytic Proton acceptor. The phosphoenolpyruvate site is built by R340 and R381.

It belongs to the EPSP synthase family. As to quaternary structure, monomer.

The protein resides in the cytoplasm. It carries out the reaction 3-phosphoshikimate + phosphoenolpyruvate = 5-O-(1-carboxyvinyl)-3-phosphoshikimate + phosphate. It functions in the pathway metabolic intermediate biosynthesis; chorismate biosynthesis. Functionally, catalyzes the transfer of the enolpyruvyl moiety of phosphoenolpyruvate (PEP) to the 5-hydroxyl of shikimate-3-phosphate (S3P) to produce enolpyruvyl shikimate-3-phosphate and inorganic phosphate. This is 3-phosphoshikimate 1-carboxyvinyltransferase from Methanococcoides burtonii (strain DSM 6242 / NBRC 107633 / OCM 468 / ACE-M).